We begin with the raw amino-acid sequence, 114 residues long: UPF0212 protein UNCMA_00570 (114 aa).

The protein belongs to the UPF0212 family.

The sequence is that of UPF0212 protein UNCMA_00570 from Methanocella arvoryzae (strain DSM 22066 / NBRC 105507 / MRE50).